The sequence spans 2455 residues: Ectopic P granules protein 5 homolog (2455 aa).

The tract at residues 1–42 is disordered; that stretch reads MATLEKPKKEKSKKSRNRVPIEKEEEEPAELSTSEEQRPAEN. S44 is modified (phosphoserine). A disordered region spans residues 77-105; that stretch reads VTSQEPEGTQEPTETEAQPSAPSAPPSTT. The segment covering 80-97 has biased composition (low complexity); that stretch reads QEPEGTQEPTETEAQPSA. The residue at position 467 (S467) is a Phosphoserine.

The protein belongs to the EPG5 family.

The protein resides in the cytoplasm. It is found in the perinuclear region. Its subcellular location is the lysosome. In terms of biological role, involved in autophagy. Plays a role in late steps of autophagy. This Drosophila melanogaster (Fruit fly) protein is Ectopic P granules protein 5 homolog.